Reading from the N-terminus, the 151-residue chain is 3-dehydroquinate dehydratase (151 aa).

Tyr24 (proton acceptor) is an active-site residue. Substrate is bound by residues Asn76, His82, and Asp89. The active-site Proton donor is the His102. Substrate contacts are provided by residues Leu103 to Ser104 and Arg113.

The protein belongs to the type-II 3-dehydroquinase family. As to quaternary structure, homododecamer.

It carries out the reaction 3-dehydroquinate = 3-dehydroshikimate + H2O. Its pathway is metabolic intermediate biosynthesis; chorismate biosynthesis; chorismate from D-erythrose 4-phosphate and phosphoenolpyruvate: step 3/7. In terms of biological role, catalyzes a trans-dehydration via an enolate intermediate. The sequence is that of 3-dehydroquinate dehydratase from Acinetobacter baumannii (strain ATCC 17978 / DSM 105126 / CIP 53.77 / LMG 1025 / NCDC KC755 / 5377).